A 363-amino-acid polypeptide reads, in one-letter code: Putative glutamate--cysteine ligase 2-3 (363 aa).

It belongs to the glutamate--cysteine ligase type 2 family. YbdK subfamily.

It carries out the reaction L-cysteine + L-glutamate + ATP = gamma-L-glutamyl-L-cysteine + ADP + phosphate + H(+). Its function is as follows. ATP-dependent carboxylate-amine ligase which exhibits weak glutamate--cysteine ligase activity. The protein is Putative glutamate--cysteine ligase 2-3 of Rubrobacter xylanophilus (strain DSM 9941 / JCM 11954 / NBRC 16129 / PRD-1).